A 269-amino-acid chain; its full sequence is Elongation factor Ts (269 aa).

The segment at 76 to 79 is involved in Mg(2+) ion dislocation from EF-Tu; it reads TDFV.

It belongs to the EF-Ts family.

The protein localises to the cytoplasm. Its function is as follows. Associates with the EF-Tu.GDP complex and induces the exchange of GDP to GTP. It remains bound to the aminoacyl-tRNA.EF-Tu.GTP complex up to the GTP hydrolysis stage on the ribosome. The protein is Elongation factor Ts of Deinococcus geothermalis (strain DSM 11300 / CIP 105573 / AG-3a).